We begin with the raw amino-acid sequence, 970 residues long: Serine/threonine-protein kinase PLK4 (970 aa).

Positions 12–265 (FKVGNLLGKG…LSSVLDHPFM (254 aa)) constitute a Protein kinase domain. ATP-binding positions include 18–26 (LGKGSFAGV) and Lys-41. N6-acetyllysine is present on residues Lys-45 and Lys-46. Asp-136 functions as the Proton acceptor in the catalytic mechanism. The interval 324 to 373 (VFPKNKSSSDFSSSGDGNSFYTQWGNQETSNSGRGRVIQDAEERPHSRYL) is disordered. Low complexity predominate over residues 327 to 343 (KNKSSSDFSSSGDGNSF). The span at 344–356 (YTQWGNQETSNSG) shows a compositional bias: polar residues. Positions 360–369 (VIQDAEERPH) are enriched in basic and acidic residues. Ser-401 carries the phosphoserine modification. Positions 498–540 (ISPTRDFQGHPDLQKDTSKNAWTDTKVKKNSDASDNAHSVKQP) are disordered. Positions 504 to 515 (FQGHPDLQKDTS) are enriched in basic and acidic residues. Polar residues predominate over residues 530 to 540 (ASDNAHSVKQP). The region spanning 586-699 (TLRSITSPLV…SRFVQLVRSK (114 aa)) is the Cryptic POLO box 1 (CPB1) domain. Phosphoserine is present on Ser-665. The region spanning 700–813 (SPKITYFTRY…GRKPGSTSSP (114 aa)) is the Cryptic POLO box 2 (CPB2) domain. The tract at residues 808–829 (GSTSSPKALSPPPSVDSNYPTR) is disordered. Ser-817 is subject to Phosphoserine. Residues 886 to 964 (QLLKSVFVKN…LSSILLMFSN (79 aa)) form the POLO box domain.

Belongs to the protein kinase superfamily. Ser/Thr protein kinase family. CDC5/Polo subfamily. Homodimer. Interacts with CEP152 (via N-terminus). Interacts with CEP78; this interaction may be important for proper PLK4 localization to the centriole and PLK4-induced overduplication of centrioles. Interacts with CEP131. Interacts simultaneously with TENT5C and CEP192. Interacts with TENT5C; this interaction leads to the TENT5C recruitment in the centrosome. Interacts with CEP85; this interaction may be important in cell migration and centriole assembly. Ubiquitinated; leading to its degradation by the proteasome. Deubiquitinated by USP54; leading to PLK4 stabilization. In terms of processing, tyrosine-phosphorylated by TEC. Post-translationally, acetylation by KAT2A and KAT2B impairs kinase activity by shifting the kinase to an inactive conformation.

The protein resides in the cytoplasm. It is found in the cytoskeleton. The protein localises to the microtubule organizing center. It localises to the centrosome. Its subcellular location is the centriole. The protein resides in the nucleus. It is found in the nucleolus. The protein localises to the cleavage furrow. The enzyme catalyses L-seryl-[protein] + ATP = O-phospho-L-seryl-[protein] + ADP + H(+). The catalysed reaction is L-threonyl-[protein] + ATP = O-phospho-L-threonyl-[protein] + ADP + H(+). Its function is as follows. Serine/threonine-protein kinase that plays a central role in centriole duplication. Able to trigger procentriole formation on the surface of the parental centriole cylinder, leading to the recruitment of centriole biogenesis proteins such as SASS6, CPAP, CCP110, CEP135 and gamma-tubulin. When overexpressed, it is able to induce centrosome amplification through the simultaneous generation of multiple procentrioles adjoining each parental centriole during S phase. Phosphorylates 'Ser-151' of FBXW5 during the G1/S transition, leading to inhibit FBXW5 ability to ubiquitinate SASS6. Its central role in centriole replication suggests a possible role in tumorigenesis, centrosome aberrations being frequently observed in tumors. Also involved in deuterosome-mediated centriole amplification in multiciliated that can generate more than 100 centrioles. Also involved in trophoblast differentiation by phosphorylating HAND1, leading to disrupt the interaction between HAND1 and MDFIC and activate HAND1. Phosphorylates CDC25C and CHEK2. Required for the recruitment of STIL to the centriole and for STIL-mediated centriole amplification. Phosphorylates CEP131 and PCM1 which is essential for proper organization and integrity of centriolar satellites. This Pongo abelii (Sumatran orangutan) protein is Serine/threonine-protein kinase PLK4.